We begin with the raw amino-acid sequence, 864 residues long: Structure-specific endonuclease subunit SLX4 (864 aa).

Residues 35 to 54 (SPLSLPSPTSLLDFLSTSTS) show a composition bias toward low complexity. Disordered stretches follow at residues 35-72 (SPLSLPSPTSLLDFLSTSTSRGPARSDTDGDKTQGKEV), 89-113 (VVSGTGGKAATGKKLKRRTESPGNA), 160-193 (KANQTVSLQPETKKSAPKGCNDTTQPAENGHIND), 288-318 (GLSDSRQSSITEDSESATSKPRRVKAKNPPK), 348-382 (LSDEPGKEKNVAKRTSGARYAKPGRKKSATTEKKN), 413-432 (ANGHSEDQHEQNEGTSHISN), and 625-771 (KTSN…ETLP). The span at 58–72 (ARSDTDGDKTQGKEV) shows a compositional bias: basic and acidic residues. Composition is skewed to polar residues over residues 160–169 (KANQTVSLQP) and 289–306 (LSDSRQSSITEDSESATS). The segment covering 307 to 317 (KPRRVKAKNPP) has biased composition (basic residues). A compositionally biased stretch (polar residues) spans 659-668 (SIPQTATTQV). Over residues 683–695 (VPVPSRRSTSTSK) the composition is skewed to low complexity. Polar residues predominate over residues 743-771 (PESFNLPTTPLTIRSGKIPSTGTASETLP).

It belongs to the SLX4 family. As to quaternary structure, forms a heterodimer with SLX1. Post-translationally, phosphorylated in response to DNA damage.

The protein resides in the nucleus. Functionally, regulatory subunit of the SLX1-SLX4 structure-specific endonuclease that resolves DNA secondary structures generated during DNA repair and recombination. Has endonuclease activity towards branched DNA substrates, introducing single-strand cuts in duplex DNA close to junctions with ss-DNA. The chain is Structure-specific endonuclease subunit SLX4 from Paracoccidioides brasiliensis (strain Pb03).